The chain runs to 367 residues: UDP-N-acetylglucosamine--N-acetylmuramyl-(pentapeptide) pyrophosphoryl-undecaprenol N-acetylglucosamine transferase (367 aa).

UDP-N-acetyl-alpha-D-glucosamine is bound by residues 15–17, Asn-126, Arg-169, Ser-197, and Gln-298; that span reads TGG.

It belongs to the glycosyltransferase 28 family. MurG subfamily.

The protein resides in the cell inner membrane. The enzyme catalyses di-trans,octa-cis-undecaprenyl diphospho-N-acetyl-alpha-D-muramoyl-L-alanyl-D-glutamyl-meso-2,6-diaminopimeloyl-D-alanyl-D-alanine + UDP-N-acetyl-alpha-D-glucosamine = di-trans,octa-cis-undecaprenyl diphospho-[N-acetyl-alpha-D-glucosaminyl-(1-&gt;4)]-N-acetyl-alpha-D-muramoyl-L-alanyl-D-glutamyl-meso-2,6-diaminopimeloyl-D-alanyl-D-alanine + UDP + H(+). It participates in cell wall biogenesis; peptidoglycan biosynthesis. Its function is as follows. Cell wall formation. Catalyzes the transfer of a GlcNAc subunit on undecaprenyl-pyrophosphoryl-MurNAc-pentapeptide (lipid intermediate I) to form undecaprenyl-pyrophosphoryl-MurNAc-(pentapeptide)GlcNAc (lipid intermediate II). In Bradyrhizobium sp. (strain ORS 278), this protein is UDP-N-acetylglucosamine--N-acetylmuramyl-(pentapeptide) pyrophosphoryl-undecaprenol N-acetylglucosamine transferase.